The sequence spans 100 residues: UPF0235 protein NE0395 (100 aa).

This sequence belongs to the UPF0235 family.

In Nitrosomonas europaea (strain ATCC 19718 / CIP 103999 / KCTC 2705 / NBRC 14298), this protein is UPF0235 protein NE0395.